The following is a 114-amino-acid chain: Large ribosomal subunit protein uL22 (114 aa).

This sequence belongs to the universal ribosomal protein uL22 family. In terms of assembly, part of the 50S ribosomal subunit.

In terms of biological role, this protein binds specifically to 23S rRNA; its binding is stimulated by other ribosomal proteins, e.g. L4, L17, and L20. It is important during the early stages of 50S assembly. It makes multiple contacts with different domains of the 23S rRNA in the assembled 50S subunit and ribosome. Functionally, the globular domain of the protein is located near the polypeptide exit tunnel on the outside of the subunit, while an extended beta-hairpin is found that lines the wall of the exit tunnel in the center of the 70S ribosome. The chain is Large ribosomal subunit protein uL22 from Streptococcus pneumoniae (strain Taiwan19F-14).